We begin with the raw amino-acid sequence, 175 residues long: Shikimate kinase (175 aa).

11–16 is a binding site for ATP; that stretch reads GAGKTT. Mg(2+) is bound at residue Thr-15. 3 residues coordinate substrate: Asp-33, Arg-57, and Gly-79. ATP is bound at residue Arg-118. Arg-140 is a substrate binding site.

It belongs to the shikimate kinase family. As to quaternary structure, monomer. Requires Mg(2+) as cofactor.

It localises to the cytoplasm. It carries out the reaction shikimate + ATP = 3-phosphoshikimate + ADP + H(+). The protein operates within metabolic intermediate biosynthesis; chorismate biosynthesis; chorismate from D-erythrose 4-phosphate and phosphoenolpyruvate: step 5/7. Its function is as follows. Catalyzes the specific phosphorylation of the 3-hydroxyl group of shikimic acid using ATP as a cosubstrate. This Phocaeicola vulgatus (strain ATCC 8482 / DSM 1447 / JCM 5826 / CCUG 4940 / NBRC 14291 / NCTC 11154) (Bacteroides vulgatus) protein is Shikimate kinase.